Here is a 217-residue protein sequence, read N- to C-terminus: CD99 antigen-like protein 2 (217 aa).

The N-terminal stretch at Met1–Gly25 is a signal peptide. Topologically, residues Asp26 to Gly141 are extracellular. The interval Val36–Met136 is disordered. Residues Thr50–Lys64 are compositionally biased toward low complexity. Positions Ala70–Asp82 are enriched in acidic residues. The span at Gln83–Lys92 shows a compositional bias: basic and acidic residues. Ser134 carries an O-linked (Xyl...) (chondroitin sulfate) serine glycan. Residues Thr142–Ile162 form a helical membrane-spanning segment. The Cytoplasmic portion of the chain corresponds to Ser163–Ile217.

Belongs to the CD99 family. O-glycosylated.

Its subcellular location is the cell membrane. The protein localises to the cell junction. The protein resides in the secreted. Plays a role in a late step of leukocyte extravasation helping cells to overcome the endothelial basement membrane. Acts at the same site as, but independently of, PECAM1. Homophilic adhesion molecule, but these interactions may not be required for cell aggregation. The protein is CD99 antigen-like protein 2 (CD99L2) of Bos taurus (Bovine).